A 92-amino-acid chain; its full sequence is Acylphosphatase (92 aa).

The 88-residue stretch at 5-92 (RVHIIVSGLV…TSCREFRILT (88 aa)) folds into the Acylphosphatase-like domain. Residues Arg20 and Asn38 contribute to the active site.

The protein belongs to the acylphosphatase family.

The catalysed reaction is an acyl phosphate + H2O = a carboxylate + phosphate + H(+). In Chlorobaculum tepidum (strain ATCC 49652 / DSM 12025 / NBRC 103806 / TLS) (Chlorobium tepidum), this protein is Acylphosphatase (acyP).